The primary structure comprises 501 residues: Glycerol kinase (501 aa).

An ADP-binding site is contributed by Thr-17. Residues Thr-17, Thr-18, and Ser-19 each contribute to the ATP site. Thr-17 provides a ligand contact to sn-glycerol 3-phosphate. Arg-21 serves as a coordination point for ADP. Residues Arg-87, Glu-88, Tyr-139, and Asp-243 each contribute to the sn-glycerol 3-phosphate site. 5 residues coordinate glycerol: Arg-87, Glu-88, Tyr-139, Asp-243, and Gln-244. 2 residues coordinate ADP: Thr-265 and Gly-308. ATP contacts are provided by Thr-265, Gly-308, Gln-312, and Gly-409. ADP-binding residues include Gly-409 and Asn-413.

It belongs to the FGGY kinase family.

The catalysed reaction is glycerol + ATP = sn-glycerol 3-phosphate + ADP + H(+). It participates in polyol metabolism; glycerol degradation via glycerol kinase pathway; sn-glycerol 3-phosphate from glycerol: step 1/1. Its activity is regulated as follows. Inhibited by fructose 1,6-bisphosphate (FBP). In terms of biological role, key enzyme in the regulation of glycerol uptake and metabolism. Catalyzes the phosphorylation of glycerol to yield sn-glycerol 3-phosphate. The polypeptide is Glycerol kinase (Pseudomonas fluorescens (strain SBW25)).